A 429-amino-acid polypeptide reads, in one-letter code: Glutamate-1-semialdehyde 2,1-aminomutase 2 (429 aa).

Lys268 bears the N6-(pyridoxal phosphate)lysine mark.

It belongs to the class-III pyridoxal-phosphate-dependent aminotransferase family. HemL subfamily. As to quaternary structure, homodimer. Pyridoxal 5'-phosphate serves as cofactor.

It is found in the cytoplasm. It carries out the reaction (S)-4-amino-5-oxopentanoate = 5-aminolevulinate. Its pathway is porphyrin-containing compound metabolism; protoporphyrin-IX biosynthesis; 5-aminolevulinate from L-glutamyl-tRNA(Glu): step 2/2. The sequence is that of Glutamate-1-semialdehyde 2,1-aminomutase 2 from Bacillus cereus (strain B4264).